Reading from the N-terminus, the 399-residue chain is Developmentally-regulated G-protein 2 (399 aa).

One can recognise an OBG-type G domain in the interval 63-288 (GRVALIGFPS…LLARMWDEMG (226 aa)). Residues 69-76 (GFPSVGKS), 115-119 (DLPGI), and 246-249 (NKID) contribute to the GTP site. The TGS domain occupies 288–366 (GLVRVYSKPQ…EDEDVVQIVK (79 aa)). The tract at residues 372–399 (EGGRGRFKSHSNAPARIADREKKAPLKQ) is disordered. Residues 388–399 (IADREKKAPLKQ) show a composition bias toward basic and acidic residues.

This sequence belongs to the TRAFAC class OBG-HflX-like GTPase superfamily. OBG GTPase family.

It localises to the cytoplasm. In terms of biological role, binds GDP and GTP, and has low GTPase activity. The polypeptide is Developmentally-regulated G-protein 2 (DRG2) (Arabidopsis thaliana (Mouse-ear cress)).